The chain runs to 218 residues: Glutathione S-transferase Mu 2 (218 aa).

The GST N-terminal domain occupies 2–88; it reads PIILGYWNIR…YIARKHNLCG (87 aa). 7–8 serves as a coordination point for glutathione; it reads YW. Residues serine 27 and serine 44 each carry the phosphoserine modification. Glutathione is bound by residues 43 to 46, lysine 50, 59 to 60, and 72 to 73; these read RSQW, NL, and QS. The region spanning 90-208 is the GST C-terminal domain; it reads TEKEKIQEDI…KSSRFLPRPV (119 aa). Tyrosine 116 serves as a coordination point for substrate.

It belongs to the GST superfamily. Mu family. In terms of assembly, homodimer.

The protein resides in the cytoplasm. It carries out the reaction RX + glutathione = an S-substituted glutathione + a halide anion + H(+). It catalyses the reaction 11(S)-hydroxy-14(S),15(S)-epoxy-(5Z,8Z,12E)-eicosatrienoate + glutathione = (11S,15S)-dihydroxy-14(R)-S-glutathionyl-(5Z,8Z,12E)-eicosatrienoate. Functionally, conjugation of reduced glutathione to a wide number of exogenous and endogenous hydrophobic electrophiles. Participates in the formation of novel hepoxilin regioisomers. In Pongo abelii (Sumatran orangutan), this protein is Glutathione S-transferase Mu 2 (GSTM2).